The sequence spans 78 residues: RNA-binding protein Hfq (78 aa).

The Sm domain occupies 10 to 70 (DLFLNSVRKQ…ISTIMPSQPV (61 aa)).

This sequence belongs to the Hfq family. Homohexamer.

RNA chaperone that binds small regulatory RNA (sRNAs) and mRNAs to facilitate mRNA translational regulation in response to envelope stress, environmental stress and changes in metabolite concentrations. Also binds with high specificity to tRNAs. The protein is RNA-binding protein Hfq of Brucella abortus (strain S19).